Consider the following 228-residue polypeptide: Orotate phosphoribosyltransferase (228 aa).

K26 contacts 5-phospho-alpha-D-ribose 1-diphosphate. 34–35 serves as a coordination point for orotate; sequence FF. Residues 72-73, R98, K99, K102, H104, and 123-131 each bind 5-phospho-alpha-D-ribose 1-diphosphate; these read YK and DDVISAGTS. S127 and R155 together coordinate orotate.

It belongs to the purine/pyrimidine phosphoribosyltransferase family. PyrE subfamily. Homodimer. The cofactor is Mg(2+).

The catalysed reaction is orotidine 5'-phosphate + diphosphate = orotate + 5-phospho-alpha-D-ribose 1-diphosphate. The protein operates within pyrimidine metabolism; UMP biosynthesis via de novo pathway; UMP from orotate: step 1/2. Catalyzes the transfer of a ribosyl phosphate group from 5-phosphoribose 1-diphosphate to orotate, leading to the formation of orotidine monophosphate (OMP). The protein is Orotate phosphoribosyltransferase of Nitrosospira multiformis (strain ATCC 25196 / NCIMB 11849 / C 71).